A 284-amino-acid chain; its full sequence is Non-selective voltage-gated ion channel VDAC3 (284 aa).

Position 2 is an N-acetylcysteine (cysteine 2). Threonine 4 carries the post-translational modification Phosphothreonine. 3 positions are modified to N6-acetyllysine: lysine 12, lysine 15, and lysine 20. The next 2 beta stranded transmembrane spans lie at 26 to 35 and 39 to 48; these read MVKIDLKTKS and VMEFSTSGHA. Lysine 54 is covalently cross-linked (Glycyl lysine isopeptide (Lys-Gly) (interchain with G-Cter in ubiquitin)). 3 beta stranded membrane-spanning segments follow: residues 55 to 65, 70 to 77, and 81 to 90; these read ASGNLETKYKV, LTFTQKWN, and TLGTEISWEN. The residue at position 91 (lysine 91) is an N6-acetyllysine. A beta stranded membrane pass occupies residues 96 to 105; sequence LKLTLDTIFV. Residues lysine 110 and lysine 111 each participate in a glycyl lysine isopeptide (Lys-Gly) (interchain with G-Cter in ubiquitin) cross-link. 10 consecutive transmembrane segments (beta stranded) span residues 112-121, 124-131, 138-146, 151-159, 164-176, 179-186, 190-199, 203-212, 219-228, and 232-239; these read SGKLKASYKR, FSVGSNVD, TIYGWAVLA, LAGYQMSFD, KLSQ…GYKA, FQLHTHVN, EFGGSIYQKV, IETSINLAWT, RFGIAAKYML, and TSLSAKVN. A Phosphoserine modification is found at serine 242. NAD(+) is bound by residues 243–245 and 261–265; these read LIG and SALID. 2 beta stranded membrane passes run 243–252 and 255–264; these read LIGLGYTQTL and GVKLTLSALI. An N6-acetyllysine; alternate modification is found at lysine 267. A Glycyl lysine isopeptide (Lys-Gly) (interchain with G-Cter in ubiquitin); alternate cross-link involves residue lysine 267. A beta stranded membrane pass occupies residues 274-283; sequence HKVGLGFELE.

It belongs to the eukaryotic mitochondrial porin family. As to quaternary structure, interacts with ARMC12 in a TBC1D21-dependent manner. Interacts with MISFA. In terms of processing, ubiquitinated by PRKN during mitophagy, leading to its degradation and enhancement of mitophagy. Deubiquitinated by USP30.

Its subcellular location is the mitochondrion outer membrane. It localises to the membrane. It carries out the reaction chloride(in) = chloride(out). The enzyme catalyses K(+)(in) = K(+)(out). In terms of biological role, non-selective voltage-gated ion channel that mediates the transport of anions and cations through the mitochondrion outer membrane and plasma membrane. Forms a high-conducting channel with a stable open state and a voltage-induced closure with a mild preference for anions over cations. Involved in male fertility and sperm mitochondrial sheath formation. This Pongo abelii (Sumatran orangutan) protein is Non-selective voltage-gated ion channel VDAC3.